A 722-amino-acid chain; its full sequence is WD repeat-containing and planar cell polarity effector protein fritz homolog (722 aa).

WD repeat units lie at residues 305-343 (LRSK…TLLA) and 344-383 (QAEL…INIQ). Residues 655-710 (IPNGPSSRWAIERRTEEEEEEEEEEEEELCTDSSGATTWNAEGELKEDQRKQDIGD) form a disordered region. The segment covering 671–684 (EEEEEEEEEEEELC) has biased composition (acidic residues). Polar residues predominate over residues 685–694 (TDSSGATTWN). Over residues 697–708 (GELKEDQRKQDI) the composition is skewed to basic and acidic residues.

It belongs to the WD repeat fritz family. As to quaternary structure, component of the CPLANE (ciliogenesis and planar polarity effectors) complex, composed of INTU, FUZ and WDPCP. Interacts with CPLANE1.

The protein resides in the cell membrane. Its subcellular location is the cytoplasm. It localises to the cytoskeleton. It is found in the cilium axoneme. The protein localises to the cilium basal body. In terms of biological role, probable effector of the planar cell polarity signaling pathway which regulates the septin cytoskeleton in both ciliogenesis and collective cell movements. Together with FUZ and WDPCP proposed to function as core component of the CPLANE (ciliogenesis and planar polarity effectors) complex involved in the recruitment of peripheral IFT-A proteins to basal bodies. Binds phosphatidylinositol 3-phosphate with highest affinity, followed by phosphatidylinositol 4-phosphate and phosphatidylinositol 5-phosphate. This chain is WD repeat-containing and planar cell polarity effector protein fritz homolog (Wdpcp), found in Mus musculus (Mouse).